Here is a 129-residue protein sequence, read N- to C-terminus: UPF0047 protein Mb2586c (129 aa).

Belongs to the UPF0047 family.

In Mycobacterium bovis (strain ATCC BAA-935 / AF2122/97), this protein is UPF0047 protein Mb2586c.